Reading from the N-terminus, the 271-residue chain is 4-hydroxy-tetrahydrodipicolinate reductase (271 aa).

NAD(+) is bound by residues Gly-10 to Met-15, Glu-36, Gly-100 to Thr-102, and Ser-124 to Met-127. His-157 serves as the catalytic Proton donor/acceptor. A (S)-2,3,4,5-tetrahydrodipicolinate-binding site is contributed by His-158. Lys-161 acts as the Proton donor in catalysis. Gly-167–Thr-168 provides a ligand contact to (S)-2,3,4,5-tetrahydrodipicolinate.

It belongs to the DapB family.

Its subcellular location is the cytoplasm. It carries out the reaction (S)-2,3,4,5-tetrahydrodipicolinate + NAD(+) + H2O = (2S,4S)-4-hydroxy-2,3,4,5-tetrahydrodipicolinate + NADH + H(+). It catalyses the reaction (S)-2,3,4,5-tetrahydrodipicolinate + NADP(+) + H2O = (2S,4S)-4-hydroxy-2,3,4,5-tetrahydrodipicolinate + NADPH + H(+). It participates in amino-acid biosynthesis; L-lysine biosynthesis via DAP pathway; (S)-tetrahydrodipicolinate from L-aspartate: step 4/4. In terms of biological role, catalyzes the conversion of 4-hydroxy-tetrahydrodipicolinate (HTPA) to tetrahydrodipicolinate. The sequence is that of 4-hydroxy-tetrahydrodipicolinate reductase from Rhodopseudomonas palustris (strain BisB18).